A 782-amino-acid chain; its full sequence is General transcription and DNA repair factor IIH helicase/translocase subunit XPB (782 aa).

Residues 1 to 11 (MGKRDRVDRDK) are compositionally biased toward basic and acidic residues. The tract at residues 1–52 (MGKRDRVDRDKKKSKKRQYEEEEEDEDDAPGNESQEAVPSAAGKQVDESSTK) is disordered. The Nuclear localization signal motif lies at 6-18 (RVDRDKKKSKKRQ). Over residues 20-30 (EEEEEDEDDAP) the composition is skewed to acidic residues. Position 34 is a phosphoserine (Ser-34). The Helicase ATP-binding domain occupies 328–489 (FGNGRARSGV…LNFLIGPKLY (162 aa)). 341–348 (PCGAGKSL) contacts ATP. The DEVH box signature appears at 442-445 (EVHT). In terms of domain architecture, Helicase C-terminal spans 543 to 703 (ACQFLIKFHE…AGMEEEELAF (161 aa)). Ser-686 carries the phosphoserine modification. Position 751 is a phosphoserine; by CK2 (Ser-751).

It belongs to the helicase family. RAD25/XPB subfamily. Component of the 7-subunit TFIIH core complex composed of XPB/ERCC3, XPD/ERCC2, GTF2H1, GTF2H2, GTF2H3, GTF2H4 and GTF2H5, which is active in NER. The core complex associates with the 3-subunit CDK-activating kinase (CAK) module composed of CCNH/cyclin H, CDK7 and MNAT1 to form the 10-subunit holoenzyme (holo-TFIIH) active in transcription. Interacts with PUF60. Interacts with ATF7IP. Interacts with KAT2A; leading to KAT2A recruitment to promoters and acetylation of histones. Part of TBP-based Pol II pre-initiation complex (PIC), in which Pol II core assembles with general transcription factors and other specific initiation factors including GTF2E1, GTF2E2, GTF2F1, GTF2F2, TCEA1, ERCC2, ERCC3, GTF2H2, GTF2H3, GTF2H4, GTF2H5, GTF2A1, GTF2A2, GTF2B and TBP; this large multi-subunit PIC complex mediates DNA unwinding and targets Pol II core to the transcription start site where the first phosphodiester bond forms. Post-translationally, phosphorylation on Ser-751 by CK2 controls the 5'-excision activity of ERCC1-XPF endonuclease; phosphorylated protein inhibits the excision activity and thus NER. Dephosphorylation reactivates the 5'-excision step. Phosphorylation has no effect on transcription or the 3'-5' helicase activity.

Its subcellular location is the nucleus. It catalyses the reaction Couples ATP hydrolysis with the unwinding of duplex DNA by translocating in the 3'-5' direction.. The catalysed reaction is ATP + H2O = ADP + phosphate + H(+). Phosphorylation on Ser-751 by CK2 controls the 5'-excision activity of ERCC1-XPF endonuclease; phosphorylated protein inhibits the excision activity and thus NER. ATPase activity is stimulated by TFIIH subunit p52 (GTF2H4). DNA translocase activity by this subunit in TFIIH is stimulated by XPA, ERCC5/XPG and XFP plus ERCC1. Functionally, ATP-dependent 3'-5' DNA helicase/translocase; binds dsDNA rather than ssDNA, unzipping it in a translocase rather than classical helicase activity. Component of the general transcription and DNA repair factor IIH (TFIIH) core complex. When complexed to CDK-activating kinase (CAK), involved in RNA transcription by RNA polymerase II. The ATPase activity of XPB/ERCC3, but not its helicase activity, is required for DNA opening; it may wrap around the damaged DNA wedging it open, causing localized melting and twisting that allows XPD/ERCC2 helicase to anchor. The ATP-dependent helicase activity of XPB/ERCC3 may be required for promoter escape. Also involved in transcription-coupled nucleotide excision repair (NER) of damaged DNA. In NER, TFIIH acts by opening DNA around the lesion to allow the excision of the damaged oligonucleotide and its replacement by a new DNA fragment. The structure of the TFIIH transcription complex differs from the NER-TFIIH complex; large movements by XPD/ERCC2 and XPB/ERCC3 are stabilized by XPA. This Rattus norvegicus (Rat) protein is General transcription and DNA repair factor IIH helicase/translocase subunit XPB (Ercc3).